We begin with the raw amino-acid sequence, 520 residues long: mRNA-capping enzyme subunit beta (520 aa).

The segment at 1 to 185 (MNVGSILNDD…PQPVFDDQDD (185 aa)) is disordered. 2 stretches are compositionally biased toward polar residues: residues 11–21 (PPSSGNANGND) and 44–56 (ITSM…SDST). The segment covering 92–108 (SSSSVGSSEHSSARSSP) has biased composition (low complexity). Basic and acidic residues-rich tracts occupy residues 126-135 (PATKTEKKAE) and 149-176 (KLEE…KKEP).

Belongs to the fungal TPase family. As to quaternary structure, heterodimer. The mRNA-capping enzyme is composed of two separate chains alpha and beta, respectively a mRNA guanylyltransferase and an mRNA 5'-triphosphate monophosphatase. The cofactor is Mg(2+).

It is found in the nucleus. It catalyses the reaction a 5'-end triphospho-ribonucleoside in mRNA + H2O = a 5'-end diphospho-ribonucleoside in mRNA + phosphate + H(+). Functionally, first step of mRNA capping. Converts the 5'-triphosphate end of a nascent mRNA chain into a diphosphate end. The polypeptide is mRNA-capping enzyme subunit beta (CET1) (Candida albicans (strain SC5314 / ATCC MYA-2876) (Yeast)).